Here is a 152-residue protein sequence, read N- to C-terminus: Small ribosomal subunit protein uS13 (152 aa).

The protein belongs to the universal ribosomal protein uS13 family.

The protein localises to the cytoplasm. Its function is as follows. Located at the top of the head of the 40S subunit, it contacts several helices of the 18S rRNA. The protein is Small ribosomal subunit protein uS13 (RPS18) of Argopecten irradians (Bay scallop).